The following is a 240-amino-acid chain: Phosphatidylserine decarboxylase proenzyme (240 aa).

The active-site Schiff-base intermediate with substrate; via pyruvic acid is Ser-198. Residue Ser-198 is modified to Pyruvic acid (Ser); by autocatalysis.

The protein belongs to the phosphatidylserine decarboxylase family. PSD-A subfamily. In terms of assembly, heterodimer of a large membrane-associated beta subunit and a small pyruvoyl-containing alpha subunit. It depends on pyruvate as a cofactor. Is synthesized initially as an inactive proenzyme. Formation of the active enzyme involves a self-maturation process in which the active site pyruvoyl group is generated from an internal serine residue via an autocatalytic post-translational modification. Two non-identical subunits are generated from the proenzyme in this reaction, and the pyruvate is formed at the N-terminus of the alpha chain, which is derived from the carboxyl end of the proenzyme. The post-translation cleavage follows an unusual pathway, termed non-hydrolytic serinolysis, in which the side chain hydroxyl group of the serine supplies its oxygen atom to form the C-terminus of the beta chain, while the remainder of the serine residue undergoes an oxidative deamination to produce ammonia and the pyruvoyl prosthetic group on the alpha chain.

The protein resides in the cell membrane. It carries out the reaction a 1,2-diacyl-sn-glycero-3-phospho-L-serine + H(+) = a 1,2-diacyl-sn-glycero-3-phosphoethanolamine + CO2. The protein operates within phospholipid metabolism; phosphatidylethanolamine biosynthesis; phosphatidylethanolamine from CDP-diacylglycerol: step 2/2. Functionally, catalyzes the formation of phosphatidylethanolamine (PtdEtn) from phosphatidylserine (PtdSer). This chain is Phosphatidylserine decarboxylase proenzyme, found in Paramagnetospirillum magneticum (strain ATCC 700264 / AMB-1) (Magnetospirillum magneticum).